Consider the following 429-residue polypeptide: Enolase 1 (429 aa).

A (2R)-2-phosphoglycerate-binding site is contributed by glutamine 163. The active-site Proton donor is the glutamate 205. Positions 242, 287, and 314 each coordinate Mg(2+). Positions 339, 368, 369, and 390 each coordinate (2R)-2-phosphoglycerate. Residue lysine 339 is the Proton acceptor of the active site.

Belongs to the enolase family. Requires Mg(2+) as cofactor.

It localises to the cytoplasm. Its subcellular location is the secreted. It is found in the cell surface. The enzyme catalyses (2R)-2-phosphoglycerate = phosphoenolpyruvate + H2O. It functions in the pathway carbohydrate degradation; glycolysis; pyruvate from D-glyceraldehyde 3-phosphate: step 4/5. In terms of biological role, catalyzes the reversible conversion of 2-phosphoglycerate (2-PG) into phosphoenolpyruvate (PEP). It is essential for the degradation of carbohydrates via glycolysis. The chain is Enolase 1 from Cupriavidus metallidurans (strain ATCC 43123 / DSM 2839 / NBRC 102507 / CH34) (Ralstonia metallidurans).